The primary structure comprises 556 residues: Dihydroxy-acid dehydratase (556 aa).

Mg(2+) is bound at residue Asp-78. Cys-119 contacts [2Fe-2S] cluster. Mg(2+) contacts are provided by Asp-120 and Lys-121. Lys-121 is modified (N6-carboxylysine). Cys-191 lines the [2Fe-2S] cluster pocket. Glu-442 contributes to the Mg(2+) binding site. Ser-468 serves as the catalytic Proton acceptor.

Belongs to the IlvD/Edd family. Homodimer. Requires [2Fe-2S] cluster as cofactor. Mg(2+) is required as a cofactor.

The enzyme catalyses (2R)-2,3-dihydroxy-3-methylbutanoate = 3-methyl-2-oxobutanoate + H2O. It catalyses the reaction (2R,3R)-2,3-dihydroxy-3-methylpentanoate = (S)-3-methyl-2-oxopentanoate + H2O. Its pathway is amino-acid biosynthesis; L-isoleucine biosynthesis; L-isoleucine from 2-oxobutanoate: step 3/4. The protein operates within amino-acid biosynthesis; L-valine biosynthesis; L-valine from pyruvate: step 3/4. Functionally, functions in the biosynthesis of branched-chain amino acids. Catalyzes the dehydration of (2R,3R)-2,3-dihydroxy-3-methylpentanoate (2,3-dihydroxy-3-methylvalerate) into 2-oxo-3-methylpentanoate (2-oxo-3-methylvalerate) and of (2R)-2,3-dihydroxy-3-methylbutanoate (2,3-dihydroxyisovalerate) into 2-oxo-3-methylbutanoate (2-oxoisovalerate), the penultimate precursor to L-isoleucine and L-valine, respectively. The polypeptide is Dihydroxy-acid dehydratase (Caldanaerobacter subterraneus subsp. tengcongensis (strain DSM 15242 / JCM 11007 / NBRC 100824 / MB4) (Thermoanaerobacter tengcongensis)).